We begin with the raw amino-acid sequence, 136 residues long: Small ribosomal subunit protein uS11 (136 aa).

The protein belongs to the universal ribosomal protein uS11 family. As to quaternary structure, part of the 30S ribosomal subunit. Interacts with proteins S7 and S18. Binds to IF-3.

Its function is as follows. Located on the platform of the 30S subunit, it bridges several disparate RNA helices of the 16S rRNA. Forms part of the Shine-Dalgarno cleft in the 70S ribosome. The protein is Small ribosomal subunit protein uS11 of Leptospira borgpetersenii serovar Hardjo-bovis (strain JB197).